A 512-amino-acid chain; its full sequence is Neuronal acetylcholine receptor subunit alpha-3 (512 aa).

The first 23 residues, 1–23 (MNSASRITLFFLLTVLITQECLS), serve as a signal peptide directing secretion. The Extracellular portion of the chain corresponds to 24 to 242 (SKGEDRLFRR…PLFYTINLII (219 aa)). N-linked (GlcNAc...) asparagine glycans are attached at residues Asn-47 and Asn-164. Cystine bridges form between Cys-151–Cys-165 and Cys-215–Cys-216. Residues 243–258 (PCLLISFLTILVFYLP) form a helical membrane-spanning segment. Residues 259 to 260 (SD) are Cytoplasmic-facing. A helical transmembrane segment spans residues 261–277 (CGEKVTLCISVLLSLTV). A Na(+)-binding site is contributed by Glu-263. Residues 278–299 (FLLVITETIPSTSLVIPLIGEY) lie on the Extracellular side of the membrane. Residues 300–318 (LLFTMIFVTLSIVITVFVL) traverse the membrane as a helical segment. The Cytoplasmic portion of the chain corresponds to 319–482 (NVHYRTPMTH…EDDWKYVAMV (164 aa)). A disordered region spans residues 356–389 (ESSGKGGGEIAGSSGTGGGRGAEGKKMKSSASQQ). Residues 359-376 (GKGGGEIAGSSGTGGGRG) show a composition bias toward gly residues. Residues 483–501 (IDRIFLWVFVLVCVLGTLG) form a helical membrane-spanning segment. Residues 502 to 512 (LFLQPLIGFFS) lie on the Extracellular side of the membrane.

It belongs to the ligand-gated ion channel (TC 1.A.9) family. Acetylcholine receptor (TC 1.A.9.1) subfamily. Alpha-3/CHRNA3 sub-subfamily. In terms of assembly, neuronal AChR is composed of two different types of subunits: alpha and beta. CHRNA3/Alpha-3 subunit can be combined to CHRNB2/beta-2 or CHRNB4/beta-4 to give rise to functional receptors. Expressed in retina and brain.

It localises to the synaptic cell membrane. The protein resides in the cell membrane. It is found in the endoplasmic reticulum. Its subcellular location is the golgi apparatus. The catalysed reaction is K(+)(in) = K(+)(out). The enzyme catalyses Na(+)(in) = Na(+)(out). It catalyses the reaction Ca(2+)(in) = Ca(2+)(out). Its activity is regulated as follows. Activated by a myriad of ligands such as acetylcholine, cytisine, nicotine, choline and epibatidine. The heteropentamer CHRNA3:CHRNB2 activity is blocked by alpha-conotoxins ImI, ImII, PnIA, GID and MII. The heteropentamer CHRNA3:CHRNB4 activity is blocked by the alpha-conotoxin ImI and AuIB. Its function is as follows. Component of neuronal acetylcholine receptors (nAChRs) that function as pentameric, ligand-gated cation channels with high calcium permeability among other activities. nAChRs are excitatory neurotrasnmitter receptors formed by a collection of nAChR subunits known to mediate synaptic transmission in the nervous system and the neuromuscular junction. Each nAchR subunit confers differential attributes to channel properties, including activation, deactivation and desensitization kinetics, pH sensitivity, cation permeability, and binding to allosteric modulators. CHRNA3 forms heteropentameric neuronal acetylcholine receptors with CHRNB2 and CHRNB4. CHRNA3:CHRNB4 being predominant in neurons of the autonomic ganglia, it is known as ganglionic nicotinic receptor. CHRNA3:CHRNB4 also plays an important role in the habenulo-interpeduncular tract, modulating the mesolimbic dopamine system and affecting reward circuits and addiction. Hypothalamic CHRNA3:CHRNB4 nAChR activation by nicotine leads to activation of POMC neurons and a decrease in food intake. Also expressed in the urothelium where it modulates reflex bladder activity by increasing intracellular calcium through extracellular influx and basal ATP release. In Carassius auratus (Goldfish), this protein is Neuronal acetylcholine receptor subunit alpha-3 (chrna3).